A 272-amino-acid chain; its full sequence is Peptidoglycolipid exporter Gap (272 aa).

Transmembrane regions (helical) follow at residues 5–25 (ILGLALFVSLNPLLLGFILLV), 36–56 (VVFWVGCLIVNVPGFLIPLFV), 79–99 (IEPFQLGTGIFALAVSAVIAL), 171–191 (LWVALVFGLAYIPPPPLVLLV), 206–226 (IIAVFVFIMAMLAVFEITLLS), and 252–272 (ILLVLFGAVGIWELIVGLGVI).

Belongs to the peptidoglycolipid addressing protein (GAP) (TC 2.A.116) family.

The protein localises to the cell inner membrane. In terms of biological role, required for the transport of peptidoglycolipids (GPLs) to the cell surface. This is Peptidoglycolipid exporter Gap from Mycolicibacterium smegmatis (strain ATCC 700084 / mc(2)155) (Mycobacterium smegmatis).